A 430-amino-acid polypeptide reads, in one-letter code: Glutamate-1-semialdehyde 2,1-aminomutase 2 (430 aa).

At Lys269 the chain carries N6-(pyridoxal phosphate)lysine.

It belongs to the class-III pyridoxal-phosphate-dependent aminotransferase family. HemL subfamily. In terms of assembly, homodimer. Pyridoxal 5'-phosphate is required as a cofactor.

It localises to the cytoplasm. It carries out the reaction (S)-4-amino-5-oxopentanoate = 5-aminolevulinate. It participates in porphyrin-containing compound metabolism; protoporphyrin-IX biosynthesis; 5-aminolevulinate from L-glutamyl-tRNA(Glu): step 2/2. This is Glutamate-1-semialdehyde 2,1-aminomutase 2 from Lysinibacillus sphaericus (strain C3-41).